The following is a 468-amino-acid chain: Glutamate--tRNA ligase (468 aa).

Residues 10-20 (PSPTGDLHIGG) carry the 'HIGH' region motif. Zn(2+) is bound by residues Cys-99, Cys-101, Cys-126, and Asp-128. The short motif at 236-240 (RLSKR) is the 'KMSKS' region element. An ATP-binding site is contributed by Lys-239.

This sequence belongs to the class-I aminoacyl-tRNA synthetase family. Glutamate--tRNA ligase type 1 subfamily. As to quaternary structure, monomer. Requires Zn(2+) as cofactor.

The protein resides in the cytoplasm. The enzyme catalyses tRNA(Glu) + L-glutamate + ATP = L-glutamyl-tRNA(Glu) + AMP + diphosphate. Its function is as follows. Catalyzes the attachment of glutamate to tRNA(Glu) in a two-step reaction: glutamate is first activated by ATP to form Glu-AMP and then transferred to the acceptor end of tRNA(Glu). In Syntrophobacter fumaroxidans (strain DSM 10017 / MPOB), this protein is Glutamate--tRNA ligase.